The sequence spans 556 residues: Arginine--tRNA ligase 1 (556 aa).

The 'HIGH' region motif lies at 132 to 142 (ANPTGNLHLGH).

It belongs to the class-I aminoacyl-tRNA synthetase family. In terms of assembly, monomer.

The protein localises to the cytoplasm. The catalysed reaction is tRNA(Arg) + L-arginine + ATP = L-arginyl-tRNA(Arg) + AMP + diphosphate. This chain is Arginine--tRNA ligase 1 (argS1), found in Halalkalibacterium halodurans (strain ATCC BAA-125 / DSM 18197 / FERM 7344 / JCM 9153 / C-125) (Bacillus halodurans).